A 238-amino-acid polypeptide reads, in one-letter code: uncharacterized protein (238 aa).

This is an uncharacterized protein from Acheta domesticus (House cricket).